The chain runs to 522 residues: Apolipoprotein N-acyltransferase (522 aa).

6 helical membrane passes run 17–37 (YFTY…FSPF), 61–81 (TALL…VSWL), 98–118 (FLVG…TYLV), 127–147 (VIFA…FTGF), 164–184 (IAPI…SAVI), and 197–217 (LKLV…SAYS). In terms of domain architecture, CN hydrolase spans 236–483 (AQGNIEQNLK…ETTLTYKIAP (248 aa)). Glu276 serves as the catalytic Proton acceptor. Lys342 is an active-site residue. Cys394 serves as the catalytic Nucleophile. The helical transmembrane segment at 495-515 (NMPLYALSLLFLLLHSMMAFI) threads the bilayer.

This sequence belongs to the CN hydrolase family. Apolipoprotein N-acyltransferase subfamily.

The protein resides in the cell inner membrane. It catalyses the reaction N-terminal S-1,2-diacyl-sn-glyceryl-L-cysteinyl-[lipoprotein] + a glycerophospholipid = N-acyl-S-1,2-diacyl-sn-glyceryl-L-cysteinyl-[lipoprotein] + a 2-acyl-sn-glycero-3-phospholipid + H(+). The protein operates within protein modification; lipoprotein biosynthesis (N-acyl transfer). Its function is as follows. Catalyzes the phospholipid dependent N-acylation of the N-terminal cysteine of apolipoprotein, the last step in lipoprotein maturation. The chain is Apolipoprotein N-acyltransferase from Haemophilus influenzae (strain ATCC 51907 / DSM 11121 / KW20 / Rd).